The following is a 338-amino-acid chain: 1-aminocyclopropane-1-carboxylate deaminase (338 aa).

K51 bears the N6-(pyridoxal phosphate)lysine mark. The active-site Nucleophile is S78.

This sequence belongs to the ACC deaminase/D-cysteine desulfhydrase family. Homotrimer. The cofactor is pyridoxal 5'-phosphate.

It catalyses the reaction 1-aminocyclopropane-1-carboxylate + H2O = 2-oxobutanoate + NH4(+). Its function is as follows. Catalyzes a cyclopropane ring-opening reaction, the irreversible conversion of 1-aminocyclopropane-1-carboxylate (ACC) to ammonia and alpha-ketobutyrate. Allows growth on ACC as a nitrogen source. The polypeptide is 1-aminocyclopropane-1-carboxylate deaminase (Variovorax paradoxus).